A 109-amino-acid chain; its full sequence is UPF0060 membrane protein PA3275 (109 aa).

A run of 4 helical transmembrane segments spans residues 5–25, 27–47, 59–79, and 84–104; these read FWFV…YLWL, LGKS…FALL, AYAA…AFVE, and LWSD…VLFG.

This sequence belongs to the UPF0060 family.

The protein resides in the cell inner membrane. The chain is UPF0060 membrane protein PA3275 from Pseudomonas aeruginosa (strain ATCC 15692 / DSM 22644 / CIP 104116 / JCM 14847 / LMG 12228 / 1C / PRS 101 / PAO1).